Consider the following 128-residue polypeptide: Glycine cleavage system H protein (128 aa).

The Lipoyl-binding domain occupies Thr-22 to Lys-104. Lys-63 bears the N6-lipoyllysine mark.

Belongs to the GcvH family. In terms of assembly, the glycine cleavage system is composed of four proteins: P, T, L and H. Requires (R)-lipoate as cofactor.

The glycine cleavage system catalyzes the degradation of glycine. The H protein shuttles the methylamine group of glycine from the P protein to the T protein. This is Glycine cleavage system H protein from Halothermothrix orenii (strain H 168 / OCM 544 / DSM 9562).